The sequence spans 124 residues: S-adenosylmethionine decarboxylase proenzyme (124 aa).

Ser-63 (schiff-base intermediate with substrate; via pyruvic acid) is an active-site residue. Ser-63 bears the Pyruvic acid (Ser); by autocatalysis mark. His-68 functions as the Proton acceptor; for processing activity in the catalytic mechanism. Cys-83 (proton donor; for catalytic activity) is an active-site residue.

The protein belongs to the prokaryotic AdoMetDC family. Type 1 subfamily. Heterotetramer of two alpha and two beta chains arranged as a dimer of alpha/beta heterodimers. Pyruvate serves as cofactor. In terms of processing, is synthesized initially as an inactive proenzyme. Formation of the active enzyme involves a self-maturation process in which the active site pyruvoyl group is generated from an internal serine residue via an autocatalytic post-translational modification. Two non-identical subunits are generated from the proenzyme in this reaction, and the pyruvate is formed at the N-terminus of the alpha chain, which is derived from the carboxyl end of the proenzyme. The post-translation cleavage follows an unusual pathway, termed non-hydrolytic serinolysis, in which the side chain hydroxyl group of the serine supplies its oxygen atom to form the C-terminus of the beta chain, while the remainder of the serine residue undergoes an oxidative deamination to produce ammonia and the pyruvoyl group blocking the N-terminus of the alpha chain.

It carries out the reaction S-adenosyl-L-methionine + H(+) = S-adenosyl 3-(methylsulfanyl)propylamine + CO2. It participates in amine and polyamine biosynthesis; S-adenosylmethioninamine biosynthesis; S-adenosylmethioninamine from S-adenosyl-L-methionine: step 1/1. Its function is as follows. Catalyzes the decarboxylation of S-adenosylmethionine to S-adenosylmethioninamine (dcAdoMet), the propylamine donor required for the synthesis of the polyamines spermine and spermidine from the diamine putrescine. The protein is S-adenosylmethionine decarboxylase proenzyme of Acetivibrio thermocellus (strain ATCC 27405 / DSM 1237 / JCM 9322 / NBRC 103400 / NCIMB 10682 / NRRL B-4536 / VPI 7372) (Clostridium thermocellum).